The primary structure comprises 379 residues: (R)-2-hydroxyglutaryl-CoA dehydratase, subunit beta (379 aa).

The protein belongs to the FldB/FldC dehydratase alpha/beta subunit family. As to quaternary structure, the (R)-2-hydroxyglutaryl-CoA dehydratase enzyme system is a heterodimer composed of an alpha subunit (HgdA) and a beta subunit (HgdB). [4Fe-4S] cluster is required as a cofactor. It depends on FMN as a cofactor. Requires Mg(2+) as cofactor.

The protein localises to the cytoplasm. The catalysed reaction is (R)-2-hydroxyglutaryl-CoA = (2E)-glutaconyl-CoA + H2O. The protein operates within amino-acid degradation; L-glutamate degradation via hydroxyglutarate pathway; crotonoyl-CoA from L-glutamate: step 4/5. Activated by the HgdC. Reversibly inactivated by oxidants such as 2-nitrophenol, 3-nitrophenol, 4-nitrophenol, 4-nitrobenzoate, carbonyl cyanide 4-(trifluoromethoxy)phenylhydrazone (FCCP) and chloramphenicol. Irreversibly inactivated by oxidants such as hydroxylamine and nitrite. Involved in the fermentation of L-glutamate via the hydroxyglutarate pathway. Catalyzes the reversible syn-elimination of water from (R)-2-hydroxyglutaryl-CoA to yield (E)-glutaconyl-CoA. The dehydration mechanism involves a transient one electron reduction of the thioester from (R)-2-hydroxyglutaryl-CoA, generating a ketyl radical. Prior to (E)-glutaconyl-CoA formation, the ketyl radical is subsequently reoxidized by electron transfer back to the HgdA-HgdB complex (CompD) to avoid change in oxidation state of the substrate. The appropriate redox state of dehydratase HgdA-HgdB complex (CompD) is maintained by HgdC (CompA) via hydrolysis of ATP and ATP-dependent electron transfer. Since the electron is recycled, the dehydratase is able to perform several turnovers with only catalytic amounts of ATP and substoichiometric amounts of HgdC (CompA). The polypeptide is (R)-2-hydroxyglutaryl-CoA dehydratase, subunit beta (Acidaminococcus fermentans (strain ATCC 25085 / DSM 20731 / CCUG 9996 / CIP 106432 / VR4)).